Here is a 752-residue protein sequence, read N- to C-terminus: Probable beta-glucosidase D (752 aa).

Residues 1–18 (MRFVSLAVGAALLGAAGA) form the signal peptide. Asparagine 187 and asparagine 237 each carry an N-linked (GlcNAc...) asparagine glycan. The active site involves aspartate 265. N-linked (GlcNAc...) asparagine glycosylation is found at asparagine 299, asparagine 343, asparagine 441, asparagine 510, asparagine 532, asparagine 571, asparagine 586, asparagine 638, asparagine 661, and asparagine 743.

This sequence belongs to the glycosyl hydrolase 3 family.

It is found in the secreted. It carries out the reaction Hydrolysis of terminal, non-reducing beta-D-glucosyl residues with release of beta-D-glucose.. It participates in glycan metabolism; cellulose degradation. Beta-glucosidases are one of a number of cellulolytic enzymes involved in the degradation of cellulosic biomass. Catalyzes the last step releasing glucose from the inhibitory cellobiose. The chain is Probable beta-glucosidase D (bglD) from Aspergillus flavus (strain ATCC 200026 / FGSC A1120 / IAM 13836 / NRRL 3357 / JCM 12722 / SRRC 167).